Reading from the N-terminus, the 412-residue chain is Divalent metal cation transporter MntH (412 aa).

The next 11 helical transmembrane spans lie at 19–39 (FALMGPAFIAAIGYIDPGNFA), 46–66 (ASFGYKLLWVVVWANLMAMLI), 94–114 (VWFYWVQAEIIAMATDLAEFI), 122–142 (LILGVSLLQGAVLTGIATFLI), 155–175 (LVIGGLLLFVAAAYIVELVFS), 196–216 (AVFLAAGVLGATIMPHVIYLH), 241–261 (IAMTIAGFVNLAMMATAAAAF), 290–310 (IFGLSLVAAGLSSTVVGTLAG), 329–349 (SVTMMPSFIVILMGLDPTRIL), 350–370 (VMSQVLLSFGIALALVPLLIF), and 389–409 (IGWMIVVLVVALNLWLLIGTL).

Belongs to the NRAMP family.

It is found in the cell inner membrane. Its function is as follows. H(+)-stimulated, divalent metal cation uptake system. This is Divalent metal cation transporter MntH from Enterobacter sp. (strain 638).